The chain runs to 546 residues: Chaperonin GroEL (546 aa).

ATP-binding positions include 30–33 (TLGP), lysine 51, 87–91 (DGTTT), glycine 415, 479–481 (NAA), and aspartate 495. Positions 526–546 (KEEKPDLSGAGAGMGGMGGMM) are disordered. Residues 535–546 (AGAGMGGMGGMM) show a composition bias toward gly residues.

This sequence belongs to the chaperonin (HSP60) family. Forms a cylinder of 14 subunits composed of two heptameric rings stacked back-to-back. Interacts with the co-chaperonin GroES.

It localises to the cytoplasm. The enzyme catalyses ATP + H2O + a folded polypeptide = ADP + phosphate + an unfolded polypeptide.. Functionally, together with its co-chaperonin GroES, plays an essential role in assisting protein folding. The GroEL-GroES system forms a nano-cage that allows encapsulation of the non-native substrate proteins and provides a physical environment optimized to promote and accelerate protein folding. The polypeptide is Chaperonin GroEL (Wigglesworthia glossinidia brevipalpis).